Here is a 1620-residue protein sequence, read N- to C-terminus: Myb-like protein X (1620 aa).

The segment covering methionine 1–asparagine 13 has biased composition (polar residues). Disordered stretches follow at residues methionine 1–threonine 57, threonine 176–glycine 204, phenylalanine 294–glutamate 318, and lysine 450–alanine 849. Low complexity predominate over residues proline 28–threonine 57. The segment covering glycine 177–glycine 187 has biased composition (gly residues). In terms of domain architecture, SWIRM spans glycine 310 to asparagine 421. Residues lysine 450–lysine 497 are compositionally biased toward basic and acidic residues. A compositionally biased stretch (acidic residues) spans glutamate 498 to glutamate 511. The span at lysine 512 to threonine 568 shows a compositional bias: basic and acidic residues. Over residues aspartate 570 to serine 598 the composition is skewed to low complexity. Positions lysine 606 to lysine 628 are enriched in basic and acidic residues. The segment covering glutamate 629–serine 645 has biased composition (low complexity). Over residues glutamate 647 to asparagine 798 the composition is skewed to basic and acidic residues. The span at glutamate 799–aspartate 834 shows a compositional bias: acidic residues. In terms of domain architecture, SANT spans proline 925 to glutamate 977. The tract at residues glutamine 1049–threonine 1506 is disordered. 3 stretches are compositionally biased toward basic and acidic residues: residues serine 1051–aspartate 1195, glutamate 1219–asparagine 1255, and histidine 1264–leucine 1302. The segment covering asparagine 1303 to asparagine 1325 has biased composition (low complexity). Residues threonine 1338 to aspartate 1350 are compositionally biased toward polar residues. 2 stretches are compositionally biased toward low complexity: residues threonine 1358 to threonine 1382 and asparagine 1390 to asparagine 1416. Composition is skewed to acidic residues over residues glutamate 1467–leucine 1481 and valine 1493–methionine 1504.

It localises to the nucleus. This chain is Myb-like protein X (mybX), found in Dictyostelium discoideum (Social amoeba).